The chain runs to 973 residues: Microtubule-associated protein 1S (973 aa).

Residues Met1 to Ser716 form a necessary for the microtubule-organizing center localization region. Disordered regions lie at residues His452 to Ala538 and Leu560 to Pro853. A compositionally biased stretch (polar residues) spans Arg459–Ser468. A Phosphoserine modification is found at Ser462. Over residues Val490–Arg506 the composition is skewed to basic and acidic residues. Over residues Pro565–Ala582 the composition is skewed to pro residues. Ser586, Ser591, and Ser593 each carry phosphoserine. A necessary for interaction with RASSF1 region spans residues Pro601–Phe973. A compositionally biased stretch (low complexity) spans Ala603–Leu621. Residues Asp645–Asn880 form a necessary for association with microtubules region. Phosphoserine is present on residues Ser660 and Ser684. Residues Pro703 to Ala722 are compositionally biased toward low complexity. At Ser724 the chain carries Phosphoserine. Positions Asp736–Asp749 are enriched in pro residues. Residues Ala782–Lys801 are compositionally biased toward low complexity. The tract at residues Gly875–Phe973 is necessary for association with actin. A necessary for the mitochondrial aggregation and genome destruction region spans residues Phe881 to Ala905.

The protein belongs to the MAP1 family. As to quaternary structure, heterodimer of a heavy and a light chain. Interacts with microtubules and actin. Both MAP1S heavy and light chains interact with microtubules. MAP1S light chain interacts with actin. Interacts with ESR1, LRPPRC, RASSF1, microtubules and VCY2. Interacts with WDR47 (via N-terminus of light chain). Interacts (via C-terminus) with GAN (via Kelch domains). As to expression, expressed in ventral and dorsal horns of the spinal cord, hippocampus, cerebral cortex, molecular, Purkinje and granular cell layers of the cerebellum and in dorsal root ganglia of the PNS (at protein level). Expressed in brain, testis, heart, lung, kidney and liver.

Its subcellular location is the nucleus. The protein resides in the cytoplasm. It localises to the cytosol. The protein localises to the cytoskeleton. It is found in the spindle. Microtubule-associated protein that mediates aggregation of mitochondria resulting in cell death and genomic destruction (MAGD). Plays a role in anchoring the microtubule organizing center to the centrosomes. Binds to DNA. Plays a role in apoptosis. Involved in the formation of microtubule bundles. This is Microtubule-associated protein 1S (Map1s) from Mus musculus (Mouse).